The chain runs to 359 residues: Biotin synthase (359 aa).

The disordered stretch occupies residues 1-22; it reads MQSTPLNFVPNAAKAPVTPGQA. One can recognise a Radical SAM core domain in the interval 58–285; sequence NAVQLSTLLS…KAMVRLSAGR (228 aa). [4Fe-4S] cluster-binding residues include Cys-73, Cys-77, and Cys-80. [2Fe-2S] cluster contacts are provided by Cys-117, Cys-148, Cys-208, and Arg-280.

This sequence belongs to the radical SAM superfamily. Biotin synthase family. Homodimer. It depends on [4Fe-4S] cluster as a cofactor. Requires [2Fe-2S] cluster as cofactor.

The catalysed reaction is (4R,5S)-dethiobiotin + (sulfur carrier)-SH + 2 reduced [2Fe-2S]-[ferredoxin] + 2 S-adenosyl-L-methionine = (sulfur carrier)-H + biotin + 2 5'-deoxyadenosine + 2 L-methionine + 2 oxidized [2Fe-2S]-[ferredoxin]. It functions in the pathway cofactor biosynthesis; biotin biosynthesis; biotin from 7,8-diaminononanoate: step 2/2. Functionally, catalyzes the conversion of dethiobiotin (DTB) to biotin by the insertion of a sulfur atom into dethiobiotin via a radical-based mechanism. The polypeptide is Biotin synthase (Ralstonia pickettii (strain 12J)).